The sequence spans 372 residues: DNA replication and repair protein RecF (372 aa).

30-37 provides a ligand contact to ATP; sequence GENGQGKT.

It belongs to the RecF family.

Its subcellular location is the cytoplasm. Its function is as follows. The RecF protein is involved in DNA metabolism; it is required for DNA replication and normal SOS inducibility. RecF binds preferentially to single-stranded, linear DNA. It also seems to bind ATP. The protein is DNA replication and repair protein RecF of Anaeromyxobacter sp. (strain K).